A 107-amino-acid chain; its full sequence is uncharacterized protein (107 aa).

A disordered region spans residues Lys87–Trp107.

This is an uncharacterized protein from Saccharomyces cerevisiae (strain ATCC 204508 / S288c) (Baker's yeast).